Here is a 180-residue protein sequence, read N- to C-terminus: ATP-dependent protease subunit HslV (180 aa).

T8 is an active-site residue. Residues G165, D168, and T171 each contribute to the Na(+) site.

This sequence belongs to the peptidase T1B family. HslV subfamily. A double ring-shaped homohexamer of HslV is capped on each side by a ring-shaped HslU homohexamer. The assembly of the HslU/HslV complex is dependent on binding of ATP.

The protein resides in the cytoplasm. The enzyme catalyses ATP-dependent cleavage of peptide bonds with broad specificity.. Its activity is regulated as follows. Allosterically activated by HslU binding. Protease subunit of a proteasome-like degradation complex believed to be a general protein degrading machinery. The protein is ATP-dependent protease subunit HslV of Lactiplantibacillus plantarum (strain ATCC BAA-793 / NCIMB 8826 / WCFS1) (Lactobacillus plantarum).